The chain runs to 91 residues: Small ribosomal subunit protein uS19 (91 aa).

This sequence belongs to the universal ribosomal protein uS19 family.

Protein S19 forms a complex with S13 that binds strongly to the 16S ribosomal RNA. This is Small ribosomal subunit protein uS19 from Ralstonia pickettii (strain 12J).